Consider the following 562-residue polypeptide: Formate--tetrahydrofolate ligase (562 aa).

Residue 71–78 (TPAGEGKS) participates in ATP binding.

The protein belongs to the formate--tetrahydrofolate ligase family.

It catalyses the reaction (6S)-5,6,7,8-tetrahydrofolate + formate + ATP = (6R)-10-formyltetrahydrofolate + ADP + phosphate. The protein operates within one-carbon metabolism; tetrahydrofolate interconversion. The protein is Formate--tetrahydrofolate ligase of Bacillus cereus (strain G9842).